Here is a 285-residue protein sequence, read N- to C-terminus: MVAQIIDGKKIAQQIKSEVAHLVQMRIKAGDAAPCLAVVLVGHDSASQMYVTSKRKTCESIGFISLAYDLPNNVSETELLMLIDQLNTNHSVDGILIQLPLPVGIDNIRVLEQIAPHKDVDGFHPYNLGRLCQRAPLLRPCTPRGVITLLERYNINIVGLNAVVVGASNIVGRPMGMELLLAGCTVTITHRFTRNLQQHVQNADLLVVAVGKAGFIPGSWIKSGAIVIDIGINCLDNGKVVGDVNFSEAIERAAYITPVPGGVGPMTVATLIQNTLQACKYRKLS.

NADP(+) is bound by residues Gly-166–Ser-168 and Ile-232.

This sequence belongs to the tetrahydrofolate dehydrogenase/cyclohydrolase family. Homodimer.

It catalyses the reaction (6R)-5,10-methylene-5,6,7,8-tetrahydrofolate + NADP(+) = (6R)-5,10-methenyltetrahydrofolate + NADPH. The catalysed reaction is (6R)-5,10-methenyltetrahydrofolate + H2O = (6R)-10-formyltetrahydrofolate + H(+). It functions in the pathway one-carbon metabolism; tetrahydrofolate interconversion. In terms of biological role, catalyzes the oxidation of 5,10-methylenetetrahydrofolate to 5,10-methenyltetrahydrofolate and then the hydrolysis of 5,10-methenyltetrahydrofolate to 10-formyltetrahydrofolate. This chain is Bifunctional protein FolD, found in Baumannia cicadellinicola subsp. Homalodisca coagulata.